A 310-amino-acid polypeptide reads, in one-letter code: Ribosomal RNA small subunit methyltransferase H (310 aa).

Residues 35–37 (GGH), aspartate 52, phenylalanine 79, aspartate 100, and glutamine 107 each bind S-adenosyl-L-methionine.

The protein belongs to the methyltransferase superfamily. RsmH family.

The protein localises to the cytoplasm. It catalyses the reaction cytidine(1402) in 16S rRNA + S-adenosyl-L-methionine = N(4)-methylcytidine(1402) in 16S rRNA + S-adenosyl-L-homocysteine + H(+). In terms of biological role, specifically methylates the N4 position of cytidine in position 1402 (C1402) of 16S rRNA. The chain is Ribosomal RNA small subunit methyltransferase H from Anaeromyxobacter sp. (strain Fw109-5).